We begin with the raw amino-acid sequence, 327 residues long: Diacylglycerol acyltransferase/mycolyltransferase Ag85B (327 aa).

The N-terminal stretch at 1 to 38 (MIDVSGKIRAWGRWLLVGAAATLPSLISLAGGAATASA) is a signal peptide. 80–81 (LR) provides a ligand contact to substrate. The fibronectin-binding stretch occupies residues 96–106 (FEWYYQSGLSV). The cysteines at positions 125 and 130 are disulfide-linked. Residues S164 and D192 each coordinate substrate. Residue S164 is the Nucleophile of the active site. E268 is a catalytic residue. Substrate is bound by residues 270–273 (FVHG), K277, and 300–302 (HSW). Residue H300 is part of the active site.

It belongs to the mycobacterial A85 antigen family.

Its subcellular location is the secreted. The enzyme catalyses 2 alpha,alpha'-trehalose 6-mycolate = alpha,alpha'-trehalose 6,6'-bismycolate + alpha,alpha-trehalose. The catalysed reaction is an acyl-CoA + a 1,2-diacyl-sn-glycerol = a triacyl-sn-glycerol + CoA. Its function is as follows. The antigen 85 proteins (FbpA, FbpB, FbpC) are responsible for the high affinity of mycobacteria for fibronectin, a large adhesive glycoprotein, which facilitates the attachment of M.tuberculosis to murine alveolar macrophages (AMs). They also help to maintain the integrity of the cell wall by catalyzing the transfer of mycolic acids to cell wall arabinogalactan and through the synthesis of alpha,alpha-trehalose dimycolate (TDM, cord factor). They catalyze the transfer of a mycoloyl residue from one molecule of alpha,alpha-trehalose monomycolate (TMM) to another TMM, leading to the formation of TDM. In Mycobacterium leprae (strain TN), this protein is Diacylglycerol acyltransferase/mycolyltransferase Ag85B (fbpB).